We begin with the raw amino-acid sequence, 591 residues long: L-fucose isomerase (591 aa).

Catalysis depends on proton acceptor residues E338 and D362. Positions 338, 362, and 529 each coordinate Mn(2+).

The protein belongs to the L-fucose isomerase family. The cofactor is Mn(2+).

Its subcellular location is the cytoplasm. It catalyses the reaction L-fucose = L-fuculose. The protein operates within carbohydrate degradation; L-fucose degradation; L-lactaldehyde and glycerone phosphate from L-fucose: step 1/3. Converts the aldose L-fucose into the corresponding ketose L-fuculose. The chain is L-fucose isomerase from Bacteroides thetaiotaomicron (strain ATCC 29148 / DSM 2079 / JCM 5827 / CCUG 10774 / NCTC 10582 / VPI-5482 / E50).